An 84-amino-acid chain; its full sequence is Sec-independent protein translocase protein TatA (84 aa).

Residues 1–21 (MGGLQPWHWLIVIAVFVLLFG) traverse the membrane as a helical segment. The interval 46-84 (MQSDSNAAKSDQPEQITSERVVVDPSTQSTSSNSDKRPA) is disordered. Polar residues predominate over residues 48 to 63 (SDSNAAKSDQPEQITS).

The protein belongs to the TatA/E family. The Tat system comprises two distinct complexes: a TatABC complex, containing multiple copies of TatA, TatB and TatC subunits, and a separate TatA complex, containing only TatA subunits. Substrates initially bind to the TatABC complex, which probably triggers association of the separate TatA complex to form the active translocon.

It is found in the cell membrane. Functionally, part of the twin-arginine translocation (Tat) system that transports large folded proteins containing a characteristic twin-arginine motif in their signal peptide across membranes. TatA could form the protein-conducting channel of the Tat system. This is Sec-independent protein translocase protein TatA from Mycolicibacterium gilvum (strain PYR-GCK) (Mycobacterium gilvum (strain PYR-GCK)).